The following is a 107-amino-acid chain: U1-lycotoxin-Ls1b (107 aa).

The first 20 residues, methionine 1–glycine 20, serve as a signal peptide directing secretion. The propeptide occupies glutamate 21–arginine 41. 4 disulfide bridges follow: cysteine 44/cysteine 59, cysteine 51/cysteine 68, cysteine 58/cysteine 86, and cysteine 70/cysteine 84.

Belongs to the neurotoxin 19 (CSTX) family. 04 (U1-Lctx) subfamily. As to expression, expressed by the venom gland.

Its subcellular location is the secreted. This chain is U1-lycotoxin-Ls1b, found in Lycosa singoriensis (Wolf spider).